Here is a 328-residue protein sequence, read N- to C-terminus: Glutathionyl-hydroquinone reductase YqjG (328 aa).

Residue cysteine 63 is the Nucleophile of the active site. Glutathione is bound by residues tryptophan 96, 130-133 (RVTV), and 148-149 (ES). Positions 172 to 296 (PPALQTKIDE…VNFDHIRNHY (125 aa)) constitute a GST C-terminal domain. Tyrosine 195 acts as the Proton donor/acceptor in catalysis. The segment at 203 to 311 (QEAYDEAVAK…TINPTGIISI (109 aa)) is dimerization.

This sequence belongs to the GST superfamily. Xi-class GSH transferase family. As to quaternary structure, homodimer.

It catalyses the reaction 2-(glutathione-S-yl)-hydroquinone + glutathione = hydroquinone + glutathione disulfide. Functionally, catalyzes glutathione (GSH)-dependent reduction of glutathionyl-hydroquinones (GS-HQs) to the corresponding hydroquinones. Can use a variety of GS-HQs as substrates, such as GS-p-hydroquinone (GS-HQ), GS-hydroxy-p-hydroquinone (GS-HHQ), GS-methyl-p-hydroquinone (GS-MHQ), GS-menadiol, and GS-trichloro-p-hydroquinone (GS-TriCH). Also displays GSH-dependent disulfide-bond reduction activity toward HED (2-hydroxyethyl disulfide), and is able to catalyze DMA (dimethylarsinate) reduction. Exhibits no GSH transferase activity with 1-chloro-2,4-dinitrobenzene (CDNB). This Escherichia coli (strain K12) protein is Glutathionyl-hydroquinone reductase YqjG (yqjG).